An 878-amino-acid chain; its full sequence is uncharacterized protein (878 aa).

Disordered stretches follow at residues 58–223 (IGVD…RTKF), 306–494 (KGRL…TSSR), 585–652 (KLLE…SGKL), and 679–709 (PSSM…GGGG). Composition is skewed to low complexity over residues 64–213 (NGNS…SGTS), 314–325 (SNSSQSSDSDYS), and 335–355 (IPNS…PNSN). Residues 362 to 372 (RNPNQLSSTNV) are compositionally biased toward polar residues. Residues 373–494 (NNNINNSGGS…TPTTPVTSSR (122 aa)) show a composition bias toward low complexity. Positions 585–595 (KLLEQQKEQQQ) are enriched in basic and acidic residues. Low complexity predominate over residues 596 to 605 (KEQQQQQKQQ). Over residues 615-624 (TDDEDEDDDE) the composition is skewed to acidic residues. Low complexity-rich tracts occupy residues 639–652 (NLSN…SGKL) and 679–704 (PSSM…SSSS).

This is an uncharacterized protein from Dictyostelium discoideum (Social amoeba).